A 636-amino-acid chain; its full sequence is MLTPTQQVGLILQYLKTRILDIYTPEQRAGIEKSEDWRQFSRRMDTHFPKLMNELDSVYGNNEALLPMLEMLLAQAWQSYSQRNSSLKDIDIARENNPDWILSNKQVGGVCYVDLFAGDLKGLKDKIPYFQELGLTYLHLMPLFKCPEGKSDGGYAVSSYRDVNPALGTIGDLREVIAALHEAGISAVVDFIFNHTSNEHEWAQRCAAGDPLFDNFYYIFPDRRMPDQYDRTLREIFPDQHPGGFSQLEDGRWVWTTFNSFQWDLNYSNPWVFRAMAGEMLFLANLGVDILRMDAVAFIWKQMGTSCENLPQAHALIRAFNAVMRIAAPAVFFKSEAIVHPDQVVQYIGQDECQIGYNPLQMALLWNTLATREVNLLHQALTYRHNLPEHTAWVNYVRSHDDIGWTFADEDAAYLGISGYDHRQFLNRFFVNRFDGSFARGVPFQYNPSTGDCRVSGTAAALVGLAQDDPHAVDRIKLLYSIALSTGGLPLIYLGDEVGTLNDDDWSQDSNKSDDSRWAHRPRYNEALYAQRNDPSTAAGQIYQGLRHMIAVRQSNPRFDGGRLVTFNTNNKHIIGYIRNNALLAFGNFSEYPQTVTAHTLQAMPFKAHDLIGGKTVSLNQDLTLQPYQVMWLEIA.

4 residues coordinate substrate: aspartate 152, histidine 195, glutamine 262, and arginine 292. The active-site Nucleophile is aspartate 294. Glutamate 336 (proton donor) is an active-site residue. 3 residues coordinate substrate: histidine 400, aspartate 401, and arginine 517.

The protein belongs to the glycosyl hydrolase 13 family. As to quaternary structure, monomer.

The protein localises to the secreted. The enzyme catalyses [(1-&gt;4)-alpha-D-glucosyl](n) + sucrose = [(1-&gt;4)-alpha-D-glucosyl](n+1) + D-fructose. With respect to regulation, amylosucrase favors hydrolysis at low sucrose concentrations, and polymerization at high sucrose concentrations. Competitively inhibited by fructose. Catalyzes the synthesis of alpha-glucan from sucrose. Catalyzes, in addition, sucrose hydrolysis, maltose and maltotriose synthesis by successive transfers of the glucosyl moiety of sucrose onto the released glucose, and finally turanose and trehalulose synthesis, these two sucrose isomers being obtained by glucosyl transfer onto fructose. The sequence is that of Amylosucrase (ams) from Neisseria polysaccharea.